A 286-amino-acid polypeptide reads, in one-letter code: 4-hydroxy-tetrahydrodipicolinate synthase (286 aa).

Threonine 42 lines the pyruvate pocket. Tyrosine 129 functions as the Proton donor/acceptor in the catalytic mechanism. The Schiff-base intermediate with substrate role is filled by lysine 157. Valine 196 is a binding site for pyruvate.

It belongs to the DapA family. Homotetramer; dimer of dimers.

It localises to the cytoplasm. It carries out the reaction L-aspartate 4-semialdehyde + pyruvate = (2S,4S)-4-hydroxy-2,3,4,5-tetrahydrodipicolinate + H2O + H(+). It functions in the pathway amino-acid biosynthesis; L-lysine biosynthesis via DAP pathway; (S)-tetrahydrodipicolinate from L-aspartate: step 3/4. Catalyzes the condensation of (S)-aspartate-beta-semialdehyde [(S)-ASA] and pyruvate to 4-hydroxy-tetrahydrodipicolinate (HTPA). This chain is 4-hydroxy-tetrahydrodipicolinate synthase, found in Chlamydia muridarum (strain MoPn / Nigg).